The sequence spans 210 residues: Prolactin-2 (210 aa).

Residues 1 to 23 (MARRSQGTKLHLAVLCLVVSCHA) form the signal peptide. Cystine bridges form between cysteine 69–cysteine 183 and cysteine 200–cysteine 210.

It belongs to the somatotropin/prolactin family.

The protein resides in the secreted. The chain is Prolactin-2 (prl2) from Oncorhynchus tshawytscha (Chinook salmon).